The sequence spans 212 residues: Ferric nitrobindin-like protein (212 aa).

Residues 1 to 11 show a composition bias toward basic and acidic residues; the sequence is MTSSDQPERGS. The interval 1–36 is disordered; that stretch reads MTSSDQPERGSGDAAVQAAAERAEQTRGRNVPQFDD. The short motif at 64–70 is the GXWXGXG element; that stretch reads GVWRGDG.

Belongs to the nitrobindin family.

This is Ferric nitrobindin-like protein from Saccharopolyspora erythraea (strain ATCC 11635 / DSM 40517 / JCM 4748 / NBRC 13426 / NCIMB 8594 / NRRL 2338).